A 332-amino-acid chain; its full sequence is Ketol-acid reductoisomerase (NADP(+)) (332 aa).

Residues 5 to 185 (VKVYYDDEVS…GCTRAGVIET (181 aa)) enclose the KARI N-terminal Rossmann domain. Residues 28–31 (YGNQ), arginine 51, serine 56, and 86–89 (DLVQ) contribute to the NADP(+) site. Histidine 111 is an active-site residue. Glycine 137 contributes to the NADP(+) binding site. A KARI C-terminal knotted domain is found at 186-331 (TFKDETESDL…RFIRKMSGLE (146 aa)). Residues aspartate 194, glutamate 198, glutamate 230, and glutamate 234 each coordinate Mg(2+). Serine 255 is a binding site for substrate.

The protein belongs to the ketol-acid reductoisomerase family. Requires Mg(2+) as cofactor.

It carries out the reaction (2R)-2,3-dihydroxy-3-methylbutanoate + NADP(+) = (2S)-2-acetolactate + NADPH + H(+). The enzyme catalyses (2R,3R)-2,3-dihydroxy-3-methylpentanoate + NADP(+) = (S)-2-ethyl-2-hydroxy-3-oxobutanoate + NADPH + H(+). Its pathway is amino-acid biosynthesis; L-isoleucine biosynthesis; L-isoleucine from 2-oxobutanoate: step 2/4. The protein operates within amino-acid biosynthesis; L-valine biosynthesis; L-valine from pyruvate: step 2/4. Its function is as follows. Involved in the biosynthesis of branched-chain amino acids (BCAA). Catalyzes an alkyl-migration followed by a ketol-acid reduction of (S)-2-acetolactate (S2AL) to yield (R)-2,3-dihydroxy-isovalerate. In the isomerase reaction, S2AL is rearranged via a Mg-dependent methyl migration to produce 3-hydroxy-3-methyl-2-ketobutyrate (HMKB). In the reductase reaction, this 2-ketoacid undergoes a metal-dependent reduction by NADPH to yield (R)-2,3-dihydroxy-isovalerate. This Pyrococcus abyssi (strain GE5 / Orsay) protein is Ketol-acid reductoisomerase (NADP(+)).